The chain runs to 894 residues: DNA mismatch repair protein MutS (894 aa).

607–614 serves as a coordination point for ATP; it reads GPNMSGKS.

The protein belongs to the DNA mismatch repair MutS family.

This protein is involved in the repair of mismatches in DNA. It is possible that it carries out the mismatch recognition step. This protein has a weak ATPase activity. This is DNA mismatch repair protein MutS from Bacillus cereus (strain ZK / E33L).